The primary structure comprises 487 residues: Galactose-1-phosphate uridylyltransferase (487 aa).

The protein belongs to the galactose-1-phosphate uridylyltransferase type 2 family.

It localises to the cytoplasm. It carries out the reaction alpha-D-galactose 1-phosphate + UDP-alpha-D-glucose = alpha-D-glucose 1-phosphate + UDP-alpha-D-galactose. It participates in carbohydrate metabolism; galactose metabolism. The chain is Galactose-1-phosphate uridylyltransferase from Lactiplantibacillus plantarum (strain ATCC BAA-793 / NCIMB 8826 / WCFS1) (Lactobacillus plantarum).